The sequence spans 379 residues: MSELSFDAPVWRHGKALRKGYTTGSCATAAAKVAELMVLRQHLIHQVSIVTPSGVTLCLNVESPHIEGQQAIAAIRKDGGDDVDATHGMLIFARVTLNDSGEITLTGGEGIGTVTRKGVGLPLGSAAINRTPRHTIESAVREAIGPARGADVEIFAPEGEVRAQKTYNSRLGILGGISIIGTTGIVTPMSEESWKRSLSLELEIKRASGLTRVILVPGNHGERFVREQMGVDTQAVVTMSNFVGYMIEEAVRLGFCQIVLVGHPGKLIKIAAGIFHTHSHIADARMETLVAHLALLGAPLELLTLVGDCDTTEAAMEHIEAYGFGHIYNHLARRICLRVMQMLRFTKTPPVCDAILFSFDNHILGSNRPVDEIAKELQC.

It belongs to the CbiD family.

It carries out the reaction Co-precorrin-5B + S-adenosyl-L-methionine = Co-precorrin-6A + S-adenosyl-L-homocysteine. It functions in the pathway cofactor biosynthesis; adenosylcobalamin biosynthesis; cob(II)yrinate a,c-diamide from sirohydrochlorin (anaerobic route): step 6/10. In terms of biological role, catalyzes the methylation of C-1 in cobalt-precorrin-5B to form cobalt-precorrin-6A. This is Cobalt-precorrin-5B C(1)-methyltransferase from Salmonella typhi.